We begin with the raw amino-acid sequence, 198 residues long: Pyridoxine/pyridoxamine 5'-phosphate oxidase 2 (198 aa).

Residues arginine 42, 59–60 (NT), lysine 66, and 121–122 (RS) each bind FMN.

This sequence belongs to the pyridoxamine 5'-phosphate oxidase family. As to quaternary structure, homodimer. Requires FMN as cofactor.

It carries out the reaction pyridoxamine 5'-phosphate + O2 + H2O = pyridoxal 5'-phosphate + H2O2 + NH4(+). It catalyses the reaction pyridoxine 5'-phosphate + O2 = pyridoxal 5'-phosphate + H2O2. It participates in cofactor metabolism; pyridoxal 5'-phosphate salvage; pyridoxal 5'-phosphate from pyridoxamine 5'-phosphate: step 1/1. The protein operates within cofactor metabolism; pyridoxal 5'-phosphate salvage; pyridoxal 5'-phosphate from pyridoxine 5'-phosphate: step 1/1. In terms of biological role, catalyzes the oxidation of either pyridoxine 5'-phosphate (PNP) or pyridoxamine 5'-phosphate (PMP) into pyridoxal 5'-phosphate (PLP). Has an in vitro catalytic efficiency for PNP approximately 300-fold lower than that of PPOX1. In Arabidopsis thaliana (Mouse-ear cress), this protein is Pyridoxine/pyridoxamine 5'-phosphate oxidase 2 (PPOX2).